We begin with the raw amino-acid sequence, 188 residues long: Peptidyl-tRNA hydrolase (188 aa).

Phenylalanine 14 is a binding site for tRNA. The active-site Proton acceptor is histidine 19. 3 residues coordinate tRNA: tyrosine 64, asparagine 66, and asparagine 112.

Belongs to the PTH family. Monomer.

The protein resides in the cytoplasm. It catalyses the reaction an N-acyl-L-alpha-aminoacyl-tRNA + H2O = an N-acyl-L-amino acid + a tRNA + H(+). Functionally, hydrolyzes ribosome-free peptidyl-tRNAs (with 1 or more amino acids incorporated), which drop off the ribosome during protein synthesis, or as a result of ribosome stalling. Catalyzes the release of premature peptidyl moieties from peptidyl-tRNA molecules trapped in stalled 50S ribosomal subunits, and thus maintains levels of free tRNAs and 50S ribosomes. This Aster yellows witches'-broom phytoplasma (strain AYWB) protein is Peptidyl-tRNA hydrolase.